The chain runs to 635 residues: 1-deoxy-D-xylulose-5-phosphate synthase (635 aa).

Residues His77 and 118–120 contribute to the thiamine diphosphate site; that span reads GHA. Residue Asp149 coordinates Mg(2+). Thiamine diphosphate is bound by residues 150–151, Asn178, Phe290, and Glu375; that span reads GS. Mg(2+) is bound at residue Asn178.

It belongs to the transketolase family. DXPS subfamily. In terms of assembly, homodimer. Requires Mg(2+) as cofactor. It depends on thiamine diphosphate as a cofactor.

The enzyme catalyses D-glyceraldehyde 3-phosphate + pyruvate + H(+) = 1-deoxy-D-xylulose 5-phosphate + CO2. It participates in metabolic intermediate biosynthesis; 1-deoxy-D-xylulose 5-phosphate biosynthesis; 1-deoxy-D-xylulose 5-phosphate from D-glyceraldehyde 3-phosphate and pyruvate: step 1/1. Catalyzes the acyloin condensation reaction between C atoms 2 and 3 of pyruvate and glyceraldehyde 3-phosphate to yield 1-deoxy-D-xylulose-5-phosphate (DXP). This is 1-deoxy-D-xylulose-5-phosphate synthase from Chlorobium phaeovibrioides (strain DSM 265 / 1930) (Prosthecochloris vibrioformis (strain DSM 265)).